We begin with the raw amino-acid sequence, 291 residues long: MFRGSIVALITPFRNGGIDERAFQDFVEWQIAEGTHGLVPVGTTGESTTLSHEEHRRVIQLCVEVSRGRVPVIAGTGSNSTEEAISLTRFAKEAGATAALVVTPYYNKPTQEGLYAHYKAIHDAVDLPIVIYNIPGRSVVDMSVATMARLAKLPNIVGVKDATGDLVRPLRTRIEIGPDFCQLSGEDATATAFLAQGGVGCISVTANVAPGLCARMQDAWARGDLAEMARVRDLLMPLHHALFVETSPGPVKYAASLLGKCAEDMRLPMVPPTQATRDVVRAALVKTGLLT.

Thr44 provides a ligand contact to pyruvate. Tyr132 serves as the catalytic Proton donor/acceptor. Lys160 serves as the catalytic Schiff-base intermediate with substrate. Residue Ile202 coordinates pyruvate.

It belongs to the DapA family. Homotetramer; dimer of dimers.

Its subcellular location is the cytoplasm. The enzyme catalyses L-aspartate 4-semialdehyde + pyruvate = (2S,4S)-4-hydroxy-2,3,4,5-tetrahydrodipicolinate + H2O + H(+). The protein operates within amino-acid biosynthesis; L-lysine biosynthesis via DAP pathway; (S)-tetrahydrodipicolinate from L-aspartate: step 3/4. Catalyzes the condensation of (S)-aspartate-beta-semialdehyde [(S)-ASA] and pyruvate to 4-hydroxy-tetrahydrodipicolinate (HTPA). This is 4-hydroxy-tetrahydrodipicolinate synthase from Rhodospirillum centenum (strain ATCC 51521 / SW).